The chain runs to 72 residues: uncharacterized protein (72 aa).

Residues 15–62 (NNNYNNNNNNNNNNNNNNNNNNNNNNNNNNININNNNNNNNNNNNNNN) are disordered.

This is an uncharacterized protein from Dictyostelium discoideum (Social amoeba).